Reading from the N-terminus, the 105-residue chain is Cell division protein FtsB (105 aa).

Topologically, residues 1 to 3 (MRI) are cytoplasmic. Residues 4–21 (VIYSMLVLLIAIQYPLWL) form a helical membrane-spanning segment. At 22 to 105 (GKGGWLKVYE…DTAKASTVKQ (84 aa)) the chain is on the periplasmic side. Residues 32-60 (MEKQVELQEAKNSLLALRNAKLEGDVKDL) adopt a coiled-coil conformation.

The protein belongs to the FtsB family. In terms of assembly, part of a complex composed of FtsB, FtsL and FtsQ.

The protein localises to the cell inner membrane. Functionally, essential cell division protein. May link together the upstream cell division proteins, which are predominantly cytoplasmic, with the downstream cell division proteins, which are predominantly periplasmic. The chain is Cell division protein FtsB from Polynucleobacter asymbioticus (strain DSM 18221 / CIP 109841 / QLW-P1DMWA-1) (Polynucleobacter necessarius subsp. asymbioticus).